The chain runs to 155 residues: Ribosomal RNA large subunit methyltransferase H (155 aa).

S-adenosyl-L-methionine is bound by residues Leu72, Gly103, and 122-127 (FGRMVW).

It belongs to the RNA methyltransferase RlmH family. In terms of assembly, homodimer.

It is found in the cytoplasm. It catalyses the reaction pseudouridine(1915) in 23S rRNA + S-adenosyl-L-methionine = N(3)-methylpseudouridine(1915) in 23S rRNA + S-adenosyl-L-homocysteine + H(+). In terms of biological role, specifically methylates the pseudouridine at position 1915 (m3Psi1915) in 23S rRNA. This is Ribosomal RNA large subunit methyltransferase H from Cereibacter sphaeroides (strain ATCC 17023 / DSM 158 / JCM 6121 / CCUG 31486 / LMG 2827 / NBRC 12203 / NCIMB 8253 / ATH 2.4.1.) (Rhodobacter sphaeroides).